Reading from the N-terminus, the 118-residue chain is Basic phospholipase A2 PA-5 (118 aa).

Disulfide bonds link C11/C71, C27/C117, C29/C45, C44/C98, C51/C91, C60/C84, and C78/C89. Positions 28, 30, and 32 each coordinate Ca(2+). The active site involves H48. D49 contributes to the Ca(2+) binding site. Residue D92 is part of the active site.

The protein belongs to the phospholipase A2 family. Group I subfamily. D49 sub-subfamily. Ca(2+) is required as a cofactor. As to expression, expressed by the venom gland.

The protein localises to the secreted. The enzyme catalyses a 1,2-diacyl-sn-glycero-3-phosphocholine + H2O = a 1-acyl-sn-glycero-3-phosphocholine + a fatty acid + H(+). Functionally, PLA2 catalyzes the calcium-dependent hydrolysis of the 2-acyl groups in 3-sn-phosphoglycerides. The sequence is that of Basic phospholipase A2 PA-5 from Pseudechis australis (Mulga snake).